The chain runs to 92 residues: Acyl carrier protein (92 aa).

The Carrier domain occupies 1–84 (MPSTADERQL…QIAAHLAEAV (84 aa)). O-(pantetheine 4'-phosphoryl)serine is present on Ser44.

This sequence belongs to the acyl carrier protein (ACP) family. In terms of processing, 4'-phosphopantetheine is transferred from CoA to a specific serine of apo-ACP by AcpS. This modification is essential for activity because fatty acids are bound in thioester linkage to the sulfhydryl of the prosthetic group.

The protein resides in the cytoplasm. The protein operates within lipid metabolism; fatty acid biosynthesis. Its function is as follows. Carrier of the growing fatty acid chain in fatty acid biosynthesis. The sequence is that of Acyl carrier protein from Streptomyces coelicolor (strain ATCC BAA-471 / A3(2) / M145).